Consider the following 291-residue polypeptide: MKRVVLFLLTNLAVMLVLSVSARILGVDRFLTSNGLDMGMLLVFAALIGFGGSFISLLMSKTMAKWSTGARVIERPANQDEAWLVDTVRQLSKKAGLQMPEVAIYDGAPNAFATGPSKSRSLVAVSTGLMQSMNKKEVGAVLAHEVAHIQNGDMVTLTLIQGVVNTFVIFLSRLAAYAVDSFLRRDDDESGSPGIGYWISSIAFEIMFGILASVVVMCFSRKREYRADAGAAALMGDRAPMIDALRALGGLEAGRLPKEMAASGIAGGGMMALFSSHPPLESRIAALESAS.

A run of 2 helical transmembrane segments spans residues 4–24 (VVLF…SARI) and 38–58 (MGML…ISLL). His-144 is a binding site for Zn(2+). The active site involves Glu-145. His-148 contacts Zn(2+). Helical transmembrane passes span 152 to 172 (GDMV…IFLS) and 199 to 219 (ISSI…VMCF). A Zn(2+)-binding site is contributed by Glu-224.

This sequence belongs to the peptidase M48B family. The cofactor is Zn(2+).

Its subcellular location is the cell inner membrane. This Chlorobium limicola (strain DSM 245 / NBRC 103803 / 6330) protein is Protease HtpX homolog.